The following is a 142-amino-acid chain: Ribosomal RNA large subunit methyltransferase H (142 aa).

Residue Gly-89 participates in S-adenosyl-L-methionine binding.

The protein belongs to the RNA methyltransferase RlmH family. As to quaternary structure, homodimer.

It is found in the cytoplasm. It catalyses the reaction pseudouridine(1915) in 23S rRNA + S-adenosyl-L-methionine = N(3)-methylpseudouridine(1915) in 23S rRNA + S-adenosyl-L-homocysteine + H(+). Its function is as follows. Specifically methylates the pseudouridine at position 1915 (m3Psi1915) in 23S rRNA. This Zymomonas mobilis subsp. mobilis (strain ATCC 31821 / ZM4 / CP4) protein is Ribosomal RNA large subunit methyltransferase H.